The chain runs to 337 residues: Anthranilate phosphoribosyltransferase (337 aa).

5-phospho-alpha-D-ribose 1-diphosphate contacts are provided by residues Gly81, 84-85, Ser89, 91-94, 109-117, and Ala121; these read GD, NVST, and KHGNRAMSS. Gly81 lines the anthranilate pocket. Ser93 provides a ligand contact to Mg(2+). Asn112 is a binding site for anthranilate. Arg167 contacts anthranilate. Positions 226 and 227 each coordinate Mg(2+).

It belongs to the anthranilate phosphoribosyltransferase family. In terms of assembly, homodimer. Mg(2+) is required as a cofactor.

It carries out the reaction N-(5-phospho-beta-D-ribosyl)anthranilate + diphosphate = 5-phospho-alpha-D-ribose 1-diphosphate + anthranilate. It participates in amino-acid biosynthesis; L-tryptophan biosynthesis; L-tryptophan from chorismate: step 2/5. Catalyzes the transfer of the phosphoribosyl group of 5-phosphorylribose-1-pyrophosphate (PRPP) to anthranilate to yield N-(5'-phosphoribosyl)-anthranilate (PRA). The polypeptide is Anthranilate phosphoribosyltransferase (Afipia carboxidovorans (strain ATCC 49405 / DSM 1227 / KCTC 32145 / OM5) (Oligotropha carboxidovorans)).